The primary structure comprises 628 residues: CMP-5'-(3-aminopropyl)phosphonate synthase (628 aa).

Positions 1–255 are mobA-like NTP transferase; sequence MNENRTFATP…DPGDQRQADF (255 aa). Residues 278-628 form a decarboxylase region; the sequence is GVTDHALLYN…TTEGAGRADG (351 aa). An N6-(pyridoxal phosphate)lysine modification is found at Lys466.

It in the N-terminal section; belongs to the MobA family. In the C-terminal section; belongs to the class-I pyridoxal-phosphate-dependent aminotransferase family. It depends on Mg(2+) as a cofactor. Pyridoxal 5'-phosphate serves as cofactor.

The enzyme catalyses 2-amino-4-phosphonobutanoate + CTP = CMP-5'-(3-amino-3-carboxypropyl)phosphonate + diphosphate. The catalysed reaction is CMP-5'-(3-amino-3-carboxypropyl)phosphonate + H(+) = CMP-5'-(3-aminopropyl)phosphonate + CO2. It functions in the pathway antibiotic biosynthesis. In terms of biological role, bifunctional cytidylyltransferase/decarboxylase involved in the biosynthesis of the phosphonate antibiotic FR-900098, a potent antimalarial agent that acts as an inhibitor of 1-deoxy-D-xylulose 5-phosphate reductoisomerase (DXR), the first enzyme in the nonmevalonate pathway for isoprenoid biosynthesis. Catalyzes the condensation of 2-amino-4-phosphonobutyrate (2APn) and CTP to form CMP-5'-2APn and then decarboxylates CMP-5'-2APn to yield CMP-5'-(3-aminopropyl)phosphonate (CMP-5'-3APn). The sequence is that of CMP-5'-(3-aminopropyl)phosphonate synthase from Streptomyces rubellomurinus (strain ATCC 31215).